Consider the following 743-residue polypeptide: Phosphoribosylformylglycinamidine synthase subunit PurL (743 aa).

The active site involves His-54. 2 residues coordinate ATP: Tyr-57 and Lys-96. A Mg(2+)-binding site is contributed by Glu-98. Substrate is bound by residues 99 to 102 and Arg-121; that span reads SHNH. The active-site Proton acceptor is His-100. Asp-122 contacts Mg(2+). Gln-245 lines the substrate pocket. Asp-273 serves as a coordination point for Mg(2+). 317–319 lines the substrate pocket; sequence ESQ. ATP is bound by residues Asp-501 and Gly-538. Asn-539 contributes to the Mg(2+) binding site. Ser-541 is a binding site for substrate.

This sequence belongs to the FGAMS family. Monomer. Part of the FGAM synthase complex composed of 1 PurL, 1 PurQ and 2 PurS subunits.

The protein resides in the cytoplasm. The enzyme catalyses N(2)-formyl-N(1)-(5-phospho-beta-D-ribosyl)glycinamide + L-glutamine + ATP + H2O = 2-formamido-N(1)-(5-O-phospho-beta-D-ribosyl)acetamidine + L-glutamate + ADP + phosphate + H(+). Its pathway is purine metabolism; IMP biosynthesis via de novo pathway; 5-amino-1-(5-phospho-D-ribosyl)imidazole from N(2)-formyl-N(1)-(5-phospho-D-ribosyl)glycinamide: step 1/2. Part of the phosphoribosylformylglycinamidine synthase complex involved in the purines biosynthetic pathway. Catalyzes the ATP-dependent conversion of formylglycinamide ribonucleotide (FGAR) and glutamine to yield formylglycinamidine ribonucleotide (FGAM) and glutamate. The FGAM synthase complex is composed of three subunits. PurQ produces an ammonia molecule by converting glutamine to glutamate. PurL transfers the ammonia molecule to FGAR to form FGAM in an ATP-dependent manner. PurS interacts with PurQ and PurL and is thought to assist in the transfer of the ammonia molecule from PurQ to PurL. This is Phosphoribosylformylglycinamidine synthase subunit PurL from Halalkalibacterium halodurans (strain ATCC BAA-125 / DSM 18197 / FERM 7344 / JCM 9153 / C-125) (Bacillus halodurans).